A 449-amino-acid chain; its full sequence is Asparagine--tRNA ligase (449 aa).

This sequence belongs to the class-II aminoacyl-tRNA synthetase family. In terms of assembly, homodimer.

It is found in the cytoplasm. The enzyme catalyses tRNA(Asn) + L-asparagine + ATP = L-asparaginyl-tRNA(Asn) + AMP + diphosphate + H(+). This chain is Asparagine--tRNA ligase, found in Mesomycoplasma hyopneumoniae (strain J / ATCC 25934 / NCTC 10110) (Mycoplasma hyopneumoniae).